The sequence spans 34 residues: Photosystem II reaction center protein Psb30 (34 aa).

Residues 5–25 traverse the membrane as a helical segment; it reads VLFQLTALIFVVAAGPLVIVL.

The protein belongs to the Psb30/Ycf12 family. PSII is composed of 1 copy each of membrane proteins PsbA, PsbB, PsbC, PsbD, PsbE, PsbF, PsbH, PsbI, PsbJ, PsbK, PsbL, PsbM, PsbT, PsbX, PsbY, PsbZ, Psb30/Ycf12, peripheral proteins of the oxygen-evolving complex and a large number of cofactors. It forms dimeric complexes.

It localises to the plastid. The protein resides in the chloroplast thylakoid membrane. In terms of biological role, a core subunit of photosystem II (PSII), probably helps stabilize the reaction center. This chain is Photosystem II reaction center protein Psb30, found in Tupiella akineta (Green alga).